Reading from the N-terminus, the 487-residue chain is 2-aminomuconic semialdehyde dehydrogenase (487 aa).

231 to 236 (GSTATA) is a binding site for NAD(+). The active-site Proton acceptor is Glu-253. Cys-287 acts as the Nucleophile in catalysis.

Belongs to the aldehyde dehydrogenase family.

Its subcellular location is the cytoplasm. The enzyme catalyses 2-aminomuconate 6-semialdehyde + NAD(+) + H2O = (2Z,4E)-2-aminomuconate + NADH + 2 H(+). Its pathway is amino-acid degradation; L-kynurenine degradation. In terms of biological role, catalyzes the NAD-dependent oxidation of 2-aminomuconic semialdehyde of the kynurenine metabolic pathway in L-tryptophan degradation. This is 2-aminomuconic semialdehyde dehydrogenase (aldh8a1) from Danio rerio (Zebrafish).